A 296-amino-acid chain; its full sequence is Thioredoxin-related transmembrane protein 2 (296 aa).

The N-terminal stretch at 1-48 (MAVLAPLIALVYSVPRLSRWLAQPYYLLSALLSAAFLLVRKLPPLCHG) is a signal peptide. Residues 49 to 102 (LPTQREDGNPCDFDWREVEILMFLSAIVMMKNRRSITVEQHIGNIFMFSKVANA) are Extracellular-facing. A helical transmembrane segment spans residues 103 to 125 (ILFFRLDIRMGLLYITLCIVFLM). The region spanning 114–270 (LLYITLCIVF…YQRAKKPSKA (157 aa)) is the Thioredoxin domain. Over 126 to 296 (TCEPPLYMGP…VSDGENKKDK (171 aa)) the chain is Cytoplasmic. Phosphoserine is present on residues Ser-211, Ser-243, and Ser-288. A disordered region spans residues 266-296 (KPSKAGDSIPEEQPVASAPTTVSDGENKKDK). Residues 293 to 296 (KKDK) carry the Di-lysine motif motif.

In terms of assembly, monomer. Homodimer; disulfide-linked. Occurs in both reduced and oxidized monomeric form. Oxidative conditions increase homodimerization. Interacts with CANX. Interacts with ATP2A2.

It is found in the endoplasmic reticulum membrane. The protein resides in the mitochondrion membrane. Functionally, endoplasmic reticulum and mitochondria-associated protein that probably functions as a regulator of cellular redox state and thereby regulates protein post-translational modification, protein folding and mitochondrial activity. Indirectly regulates neuronal proliferation, migration, and organization in the developing brain. This Pongo abelii (Sumatran orangutan) protein is Thioredoxin-related transmembrane protein 2 (TMX2).